The sequence spans 425 residues: MDYINLNYRPNEGDLLSCMVIKGENLEKLANEIAGESSIGTWTKVQTMKSDIYEKLRPKVYEIKEIGEENGYKVGLIKIAYPLYDFEINNMPGVLAGIAGNIFGMKIAKGLRILDFRFPAEFVKAYKGPRFGIEGVRETLKIKERPLLGTIVKPKVGLKTEEHAKVAYEAWVGGVDLVKDDENLTSQEFNKFEDRIYKTLEMRDKAEEETGERKAYMPNITAPYREMIRRAEIAEDAGSEYVMIDVVVCGFSAVQSFREEDFKFIIHAHRAMHAAMTRSRDFGISMLALAKIYRLLGVDQLHIGTVVGKMEGGEKEVKAIRDEIVYDKVEADNENKFFNQDWFDIKPVFPVSSGGVHPRLVPKIVEILGRDLIIQAGGGVHGHPDGTRAGAKAMRAAIEAIIEGKSLEEKAEEVAELKKALEYWK.

Catalysis depends on Lys153, which acts as the Proton acceptor. Substrate is bound at residue Lys155. Residues Lys179, Asp181, and Glu182 each coordinate Mg(2+). An N6-carboxylysine modification is found at Lys179. His269 (proton acceptor) is an active-site residue. Substrate is bound by residues Arg270, His302, 353 to 355 (SGG), and 375 to 378 (QAGG).

Belongs to the RuBisCO large chain family. Type III subfamily. Homodimer. In contrast to form I RuBisCO, the form III RuBisCO is composed solely of large subunits. Requires Mg(2+) as cofactor.

It catalyses the reaction 2 (2R)-3-phosphoglycerate + 2 H(+) = D-ribulose 1,5-bisphosphate + CO2 + H2O. The enzyme catalyses D-ribulose 1,5-bisphosphate + O2 = 2-phosphoglycolate + (2R)-3-phosphoglycerate + 2 H(+). With respect to regulation, reversibly inhibited by O(2). In terms of biological role, catalyzes the addition of molecular CO(2) and H(2)O to ribulose 1,5-bisphosphate (RuBP), generating two molecules of 3-phosphoglycerate (3-PGA). Functions in an archaeal AMP degradation pathway, together with AMP phosphorylase and R15P isomerase. The polypeptide is Ribulose bisphosphate carboxylase (Methanocaldococcus jannaschii (strain ATCC 43067 / DSM 2661 / JAL-1 / JCM 10045 / NBRC 100440) (Methanococcus jannaschii)).